The sequence spans 336 residues: N-acetyl-gamma-glutamyl-phosphate reductase (336 aa).

The active site involves Cys-148.

It belongs to the NAGSA dehydrogenase family. Type 1 subfamily.

The protein localises to the cytoplasm. The catalysed reaction is N-acetyl-L-glutamate 5-semialdehyde + phosphate + NADP(+) = N-acetyl-L-glutamyl 5-phosphate + NADPH + H(+). The protein operates within amino-acid biosynthesis; L-arginine biosynthesis; N(2)-acetyl-L-ornithine from L-glutamate: step 3/4. Its function is as follows. Catalyzes the NADPH-dependent reduction of N-acetyl-5-glutamyl phosphate to yield N-acetyl-L-glutamate 5-semialdehyde. This is N-acetyl-gamma-glutamyl-phosphate reductase from Campylobacter curvus (strain 525.92).